We begin with the raw amino-acid sequence, 1761 residues long: Nonribosomal peptide synthetase 6 (1761 aa).

Positions 63–468 are adenylation; it reads ERAALHPEKI…GRQDQQVKLR (406 aa). The 76-residue stretch at 600-675 folds into the Carrier 1 domain; it reads EATTEMELKL…SMAEKAKPVS (76 aa). S636 is modified (O-(pantetheine 4'-phosphoryl)serine). The tract at residues 712–1135 is condensation 1; sequence VEDVYPCTPL…AVLDPVEAQD (424 aa). 2 consecutive Carrier domains span residues 1169–1242 and 1237–1313; these read SPNE…SNER and SASN…EEET. Residues S1203 and S1274 each carry the O-(pantetheine 4'-phosphoryl)serine modification. Residues 1354–1677 are condensation 2; the sequence is IYPTRPLQQL…ESVQWFDTVV (324 aa).

The protein belongs to the NRP synthetase family.

It participates in siderophore biosynthesis. Nonribosomal peptide synthetase; part of the gene cluster that mediates the biosynthesis of hydroxamate-containing siderophores that play a critical role in virulence. Cochliobolus heterostrophus produces extracellular coprogen-type siderophores including coprogen, neocoprogen I and neocoprogen II, as well as the intracellular siderophore ferricrocin. The role of extracellular siderophores is to supply iron to the fungus during plant infection, and the intracellular ferricrocin is required for intracellular iron distribution and storage with a crucial role in ascus and ascospore development. SIDA2 catalyzes the conversion of L-ornithine to N(5)-hydroxyornithine, the first step in the biosynthesis of all hydroxamate-containing siderophores. The assembly of extracellular coprogen-type siderophores is then performed by the nonribosomal peptide synthetase (NRPS) NPS6 whereas the intracellular siderophore ferricrocin is assembled by NPS2. In Cochliobolus heterostrophus (strain C4 / ATCC 48331 / race T) (Southern corn leaf blight fungus), this protein is Nonribosomal peptide synthetase 6.